We begin with the raw amino-acid sequence, 223 residues long: DNA mismatch repair protein MutH (223 aa).

This sequence belongs to the MutH family.

It is found in the cytoplasm. Functionally, sequence-specific endonuclease that cleaves unmethylated GATC sequences. It is involved in DNA mismatch repair. This is DNA mismatch repair protein MutH from Shewanella oneidensis (strain ATCC 700550 / JCM 31522 / CIP 106686 / LMG 19005 / NCIMB 14063 / MR-1).